We begin with the raw amino-acid sequence, 400 residues long: Chalcone synthase C2 (400 aa).

Cysteine 168 is a catalytic residue.

Belongs to the thiolase-like superfamily. Chalcone/stilbene synthases family.

It carries out the reaction (E)-4-coumaroyl-CoA + 3 malonyl-CoA + 3 H(+) = 2',4,4',6'-tetrahydroxychalcone + 3 CO2 + 4 CoA. It participates in secondary metabolite biosynthesis; flavonoid biosynthesis. Functionally, the primary product of this enzyme is 4,2',4',6'-tetrahydroxychalcone (also termed naringenin-chalcone or chalcone) which can under specific conditions spontaneously isomerize into naringenin. This chain is Chalcone synthase C2 (C2), found in Zea mays (Maize).